We begin with the raw amino-acid sequence, 939 residues long: Aconitate hydratase A (939 aa).

A disordered region spans residues 433–453 (GSGESLATGAEGRPSKPVTVA). 3 residues coordinate [4Fe-4S] cluster: C475, C541, and C544.

Belongs to the aconitase/IPM isomerase family. In terms of assembly, monomer. Requires [4Fe-4S] cluster as cofactor.

The enzyme catalyses citrate = D-threo-isocitrate. It carries out the reaction (2S,3R)-3-hydroxybutane-1,2,3-tricarboxylate = 2-methyl-cis-aconitate + H2O. Its pathway is carbohydrate metabolism; tricarboxylic acid cycle; isocitrate from oxaloacetate: step 2/2. It functions in the pathway organic acid metabolism; propanoate degradation. Functionally, involved in the catabolism of short chain fatty acids (SCFA) via the tricarboxylic acid (TCA)(acetyl degradation route) and probably via the 2-methylcitrate cycle I (propionate degradation route). Catalyzes the reversible isomerization of citrate to isocitrate via cis-aconitate. Could catalyze the hydration of 2-methyl-cis-aconitate to yield (2R,3S)-2-methylisocitrate. The apo form of AcnA functions as a RNA-binding regulatory protein. The chain is Aconitate hydratase A (acn) from Corynebacterium glutamicum (strain ATCC 13032 / DSM 20300 / JCM 1318 / BCRC 11384 / CCUG 27702 / LMG 3730 / NBRC 12168 / NCIMB 10025 / NRRL B-2784 / 534).